The chain runs to 223 residues: Phosphoribosylformylglycinamidine synthase subunit PurQ (223 aa).

One can recognise a Glutamine amidotransferase type-1 domain in the interval 3-223; that stretch reads FAVLVFPGSN…MVKSWREQHV (221 aa). The Nucleophile role is filled by Cys85. Active-site residues include His193 and Glu195.

Part of the FGAM synthase complex composed of 1 PurL, 1 PurQ and 2 PurS subunits.

It is found in the cytoplasm. It carries out the reaction N(2)-formyl-N(1)-(5-phospho-beta-D-ribosyl)glycinamide + L-glutamine + ATP + H2O = 2-formamido-N(1)-(5-O-phospho-beta-D-ribosyl)acetamidine + L-glutamate + ADP + phosphate + H(+). The enzyme catalyses L-glutamine + H2O = L-glutamate + NH4(+). It participates in purine metabolism; IMP biosynthesis via de novo pathway; 5-amino-1-(5-phospho-D-ribosyl)imidazole from N(2)-formyl-N(1)-(5-phospho-D-ribosyl)glycinamide: step 1/2. Part of the phosphoribosylformylglycinamidine synthase complex involved in the purines biosynthetic pathway. Catalyzes the ATP-dependent conversion of formylglycinamide ribonucleotide (FGAR) and glutamine to yield formylglycinamidine ribonucleotide (FGAM) and glutamate. The FGAM synthase complex is composed of three subunits. PurQ produces an ammonia molecule by converting glutamine to glutamate. PurL transfers the ammonia molecule to FGAR to form FGAM in an ATP-dependent manner. PurS interacts with PurQ and PurL and is thought to assist in the transfer of the ammonia molecule from PurQ to PurL. In Staphylococcus aureus (strain USA300), this protein is Phosphoribosylformylglycinamidine synthase subunit PurQ.